We begin with the raw amino-acid sequence, 439 residues long: Ribosomal protein uS12 methylthiotransferase RimO (439 aa).

Residues 5 to 115 (PKIGFVSLGC…LIEAVHTHAP (111 aa)) enclose the MTTase N-terminal domain. C14, C50, C79, C146, C150, and C153 together coordinate [4Fe-4S] cluster. Residues 132–369 (LTPRHYSYLK…MGLQAQISAD (238 aa)) form the Radical SAM core domain. The region spanning 372–439 (QRFVGTEQQV…ESTEYDLIAD (68 aa)) is the TRAM domain.

This sequence belongs to the methylthiotransferase family. RimO subfamily. The cofactor is [4Fe-4S] cluster.

Its subcellular location is the cytoplasm. The catalysed reaction is L-aspartate(89)-[ribosomal protein uS12]-hydrogen + (sulfur carrier)-SH + AH2 + 2 S-adenosyl-L-methionine = 3-methylsulfanyl-L-aspartate(89)-[ribosomal protein uS12]-hydrogen + (sulfur carrier)-H + 5'-deoxyadenosine + L-methionine + A + S-adenosyl-L-homocysteine + 2 H(+). Its function is as follows. Catalyzes the methylthiolation of an aspartic acid residue of ribosomal protein uS12. In Francisella philomiragia subsp. philomiragia (strain ATCC 25017 / CCUG 19701 / FSC 153 / O#319-036), this protein is Ribosomal protein uS12 methylthiotransferase RimO.